The chain runs to 422 residues: Adenylosuccinate synthetase (422 aa).

GTP contacts are provided by residues 11-17 (GDEGKGK) and 39-41 (GHT). Aspartate 12 (proton acceptor) is an active-site residue. Positions 12 and 39 each coordinate Mg(2+). IMP is bound by residues 12–15 (DEGK), 37–40 (NAGH), threonine 129, arginine 143, asparagine 219, threonine 234, and arginine 298. The active-site Proton donor is the histidine 40. 294 to 300 (VTTGRKR) is a substrate binding site. Residues arginine 300, 326–328 (KLD), and 411–413 (GTG) contribute to the GTP site.

The protein belongs to the adenylosuccinate synthetase family. Homodimer. Mg(2+) is required as a cofactor.

The protein localises to the cytoplasm. It carries out the reaction IMP + L-aspartate + GTP = N(6)-(1,2-dicarboxyethyl)-AMP + GDP + phosphate + 2 H(+). The protein operates within purine metabolism; AMP biosynthesis via de novo pathway; AMP from IMP: step 1/2. In terms of biological role, plays an important role in the de novo pathway and in the salvage pathway of purine nucleotide biosynthesis. Catalyzes the first committed step in the biosynthesis of AMP from IMP. The protein is Adenylosuccinate synthetase of Talaromyces marneffei (strain ATCC 18224 / CBS 334.59 / QM 7333) (Penicillium marneffei).